Reading from the N-terminus, the 487-residue chain is Histamine H1 receptor (487 aa).

The Extracellular segment spans residues 1-29 (MSLPNSSCLLEDKMCEGNKTTMASPQLMP). N-linked (GlcNAc...) asparagine glycans are attached at residues Asn5 and Asn18. Residues 30–50 (LVVVLSTISLVTVGLNLLVLY) form a helical membrane-spanning segment. Over 51-64 (AVRSERKLHTVGNL) the chain is Cytoplasmic. Residues 65–89 (YIVSLSVADLIVGAVVMPMNILYLL) traverse the membrane as a helical segment. Residues 90–97 (MSKWSLGR) are Extracellular-facing. Residues 98–123 (PLCLFWLSMDYVASTASIFSVFILCI) traverse the membrane as a helical segment. Cysteines 100 and 180 form a disulfide. Histamine-binding residues include Asp107 and Thr112. The segment at 107 to 112 (DYVAST) is important for agonist binding. The Cytoplasmic segment spans residues 124–144 (DRYRSVQQPLRYLKYRTKTRA). Residues Thr140 and Thr142 each carry the phosphothreonine modification. Residues 145-164 (SATILGAWFLSFLWVIPILG) form a helical membrane-spanning segment. The Extracellular portion of the chain corresponds to 165–188 (WNHFRQQISVRREDKCETDFYDVT). Residues 189 to 211 (WFKVMTAIINFYLPTLLMLWFYA) form a helical membrane-spanning segment. Residue Asn198 coordinates histamine. The Cytoplasmic portion of the chain corresponds to 212–416 (KIYKAVQKHC…MNRERKAAKQ (205 aa)). Ser230 is subject to Phosphoserine. The segment covering 238–261 (KLRPENPKGDAKKPGKESPWEVLK) has biased composition (basic and acidic residues). The segment at 238-286 (KLRPENPKGDAKKPGKESPWEVLKRKPKDAGGGSVLKSPSQTPKEMKSP) is disordered. A Phosphothreonine modification is found at Thr279. 2 positions are modified to phosphoserine: Ser344 and Ser347. The tract at residues 345–379 (EISEDQMLGDSQSFSRTDSDTTTETAPGKGKLRSG) is disordered. Over residues 353-369 (GDSQSFSRTDSDTTTET) the composition is skewed to polar residues. 3 positions are modified to phosphoserine: Ser380, Ser396, and Ser398. The chain crosses the membrane as a helical span at residues 417–440 (LGFIMAAFILCWIPYFIFFMVIAF). Positions 424–428 (FILCW) are important for agonist binding. Tyr431 provides a ligand contact to histamine. A disulfide bridge links Cys441 with Cys444. At 441 to 446 (CKNCCN) the chain is on the extracellular side. The chain crosses the membrane as a helical span at residues 447–469 (EHLHMFTIWLGYINSTLNPLIYP). At 470–487 (LCNENFKKTFKRILHIRS) the chain is on the cytoplasmic side.

This sequence belongs to the G-protein coupled receptor 1 family. Phosphorylation at sites in the second and third cytoplasmic loops independently contribute to agonist-induced receptor down-regulation.

It localises to the cell membrane. In terms of biological role, G-protein-coupled receptor for histamine, a biogenic amine that functions as an immune modulator and a neurotransmitter. Through the H1 receptor, histamine mediates the contraction of smooth muscles and increases capillary permeability due to contraction of terminal venules. Also mediates neurotransmission in the central nervous system and thereby regulates circadian rhythms, emotional and locomotor activities as well as cognitive functions. The protein is Histamine H1 receptor of Pongo pygmaeus (Bornean orangutan).